The sequence spans 204 residues: GTP cyclohydrolase 1 (204 aa).

Zn(2+) is bound by residues Cys93, His96, and Cys164.

The protein belongs to the GTP cyclohydrolase I family. In terms of assembly, toroid-shaped homodecamer, composed of two pentamers of five dimers.

The catalysed reaction is GTP + H2O = 7,8-dihydroneopterin 3'-triphosphate + formate + H(+). The protein operates within cofactor biosynthesis; 7,8-dihydroneopterin triphosphate biosynthesis; 7,8-dihydroneopterin triphosphate from GTP: step 1/1. In Rhizobium meliloti (strain 1021) (Ensifer meliloti), this protein is GTP cyclohydrolase 1.